Here is a 142-residue protein sequence, read N- to C-terminus: Small ribosomal subunit protein uS19 (142 aa).

This sequence belongs to the universal ribosomal protein uS19 family. Component of the small ribosomal subunit. Mature ribosomes consist of a small (40S) and a large (60S) subunit. The 40S subunit contains about 32 different proteins and 1 molecule of RNA (18S). The 60S subunit contains 45 different proteins and 3 molecules of RNA (25S, 5.8S and 5S).

It localises to the cytoplasm. Functionally, component of the ribosome, a large ribonucleoprotein complex responsible for the synthesis of proteins in the cell. The small ribosomal subunit (SSU) binds messenger RNAs (mRNAs) and translates the encoded message by selecting cognate aminoacyl-transfer RNA (tRNA) molecules. The large subunit (LSU) contains the ribosomal catalytic site termed the peptidyl transferase center (PTC), which catalyzes the formation of peptide bonds, thereby polymerizing the amino acids delivered by tRNAs into a polypeptide chain. The nascent polypeptides leave the ribosome through a tunnel in the LSU and interact with protein factors that function in enzymatic processing, targeting, and the membrane insertion of nascent chains at the exit of the ribosomal tunnel. RPS15 has a role in the late stage of the assembly of pre-40S particles within the nucleus and controls their export to the cytoplasm. The protein is Small ribosomal subunit protein uS19 (RPS15) of Candida albicans (strain SC5314 / ATCC MYA-2876) (Yeast).